Consider the following 176-residue polypeptide: ATP-dependent protease subunit HslV (176 aa).

Residue Thr5 is part of the active site. Positions 161, 164, and 167 each coordinate Na(+).

The protein belongs to the peptidase T1B family. HslV subfamily. A double ring-shaped homohexamer of HslV is capped on each side by a ring-shaped HslU homohexamer. The assembly of the HslU/HslV complex is dependent on binding of ATP.

It localises to the cytoplasm. The catalysed reaction is ATP-dependent cleavage of peptide bonds with broad specificity.. Allosterically activated by HslU binding. Protease subunit of a proteasome-like degradation complex believed to be a general protein degrading machinery. The polypeptide is ATP-dependent protease subunit HslV (Wolinella succinogenes (strain ATCC 29543 / DSM 1740 / CCUG 13145 / JCM 31913 / LMG 7466 / NCTC 11488 / FDC 602W) (Vibrio succinogenes)).